The sequence spans 407 residues: Argininosuccinate synthase (407 aa).

Residues 12–20 (AFSGGLDTS) and Ala-39 each bind ATP. L-citrulline is bound by residues Tyr-90 and Ser-95. Gly-120 serves as a coordination point for ATP. Residues Thr-122, Asn-126, and Asp-127 each contribute to the L-aspartate site. Position 126 (Asn-126) interacts with L-citrulline. Residues Arg-130, Ser-181, Ser-190, Glu-266, and Tyr-278 each coordinate L-citrulline.

This sequence belongs to the argininosuccinate synthase family. Type 1 subfamily. As to quaternary structure, homotetramer.

It localises to the cytoplasm. The enzyme catalyses L-citrulline + L-aspartate + ATP = 2-(N(omega)-L-arginino)succinate + AMP + diphosphate + H(+). It participates in amino-acid biosynthesis; L-arginine biosynthesis; L-arginine from L-ornithine and carbamoyl phosphate: step 2/3. The sequence is that of Argininosuccinate synthase from Nitrosospira multiformis (strain ATCC 25196 / NCIMB 11849 / C 71).